The chain runs to 164 residues: Dihydrofolate reductase (164 aa).

Residues 2-162 (NISIIVAMSQ…FYVTFKILKK (161 aa)) form the DHFR domain. Substrate is bound at residue 6–8 (IVA). NADP(+) is bound by residues 7–8 (VA) and 15–20 (IGQKNS). Residue Asp-28 coordinates substrate. 44 to 47 (GRKT) is an NADP(+) binding site. Arg-58 is a substrate binding site. Residues 63-66 (LTRQ) and 96-101 (IGGSNL) contribute to the NADP(+) site. Thr-115 is a binding site for substrate.

The protein belongs to the dihydrofolate reductase family.

It catalyses the reaction (6S)-5,6,7,8-tetrahydrofolate + NADP(+) = 7,8-dihydrofolate + NADPH + H(+). Its pathway is cofactor biosynthesis; tetrahydrofolate biosynthesis; 5,6,7,8-tetrahydrofolate from 7,8-dihydrofolate: step 1/1. Key enzyme in folate metabolism. Catalyzes an essential reaction for de novo glycine and purine synthesis, and for DNA precursor synthesis. The chain is Dihydrofolate reductase (folA) from Buchnera aphidicola subsp. Baizongia pistaciae (strain Bp).